Reading from the N-terminus, the 786-residue chain is Kazrin-A (786 aa).

The segment at 44 to 70 (EEPGEPQEHQQQQQQQNHQDAPVQRQK) is disordered. Residues 52–62 (HQQQQQQQNHQ) are compositionally biased toward low complexity. The stretch at 92-270 (LLHEEVLRLQ…SLATLTKDVP (179 aa)) forms a coiled coil. Residues 350–425 (MSDASVMEGE…LFDDSDSLSS (76 aa)) are disordered. SAM domains are found at residues 457–522 (WRAG…YRDA), 535–599 (DHHW…LHTL), and 623–686 (WTCQ…SEEM). Positions 703–760 (PLGTPPTLHRQSSLSSSSPSCHDDQQSLRRVKQQLGLSPKNLTARNISHQSRSGSFPR) are disordered. A compositionally biased stretch (polar residues) spans 742 to 758 (KNLTARNISHQSRSGSF).

Belongs to the kazrin family.

The chain is Kazrin-A (kazna) from Danio rerio (Zebrafish).